A 160-amino-acid polypeptide reads, in one-letter code: 2-C-methyl-D-erythritol 2,4-cyclodiphosphate synthase (160 aa).

A divalent metal cation is bound by residues aspartate 11 and histidine 13. Residues 11–13 and 37–38 each bind 4-CDP-2-C-methyl-D-erythritol 2-phosphate; these read DVH and HS. Histidine 45 contacts a divalent metal cation. 4-CDP-2-C-methyl-D-erythritol 2-phosphate-binding positions include 59–61, 64–68, 103–109, 135–138, phenylalanine 142, and arginine 145; these read DIG, FPDTD, AQAPKMA, and TTTE.

This sequence belongs to the IspF family. In terms of assembly, homotrimer. Requires a divalent metal cation as cofactor.

The enzyme catalyses 4-CDP-2-C-methyl-D-erythritol 2-phosphate = 2-C-methyl-D-erythritol 2,4-cyclic diphosphate + CMP. It participates in isoprenoid biosynthesis; isopentenyl diphosphate biosynthesis via DXP pathway; isopentenyl diphosphate from 1-deoxy-D-xylulose 5-phosphate: step 4/6. In terms of biological role, involved in the biosynthesis of isopentenyl diphosphate (IPP) and dimethylallyl diphosphate (DMAPP), two major building blocks of isoprenoid compounds. Catalyzes the conversion of 4-diphosphocytidyl-2-C-methyl-D-erythritol 2-phosphate (CDP-ME2P) to 2-C-methyl-D-erythritol 2,4-cyclodiphosphate (ME-CPP) with a corresponding release of cytidine 5-monophosphate (CMP). The polypeptide is 2-C-methyl-D-erythritol 2,4-cyclodiphosphate synthase (Thiobacillus denitrificans (strain ATCC 25259 / T1)).